Consider the following 192-residue polypeptide: Probable metallophosphoesterase MJ0623 (192 aa).

Residues aspartate 41, histidine 43, aspartate 70, asparagine 92, histidine 115, histidine 144, and histidine 146 each coordinate a divalent metal cation.

The protein belongs to the metallophosphoesterase superfamily. YfcE family. A divalent metal cation serves as cofactor.

The sequence is that of Probable metallophosphoesterase MJ0623 from Methanocaldococcus jannaschii (strain ATCC 43067 / DSM 2661 / JAL-1 / JCM 10045 / NBRC 100440) (Methanococcus jannaschii).